A 146-amino-acid polypeptide reads, in one-letter code: VHWTETERATIETVYQKLHLDEVGREALTRLFIVYPWTTRYFKSFGDLSSSKAIASNPKVTEHGLKVMNKLTEAIHNLDHIKDLFHKLSEKHFHELHVDPQNFKLLSKCLIIVLATKLGKQLTPDVQATWEKLLSVVVAALSREYH.

Residues 2–146 (HWTETERATI…VVAALSREYH (145 aa)) form the Globin domain. The heme b site is built by His-63 and His-92.

This sequence belongs to the globin family. Heterotetramer of two alpha chains and two beta chains (an easy dimerization is also reported). As to expression, red blood cells.

Involved in oxygen transport from the lung to the various peripheral tissues. The chain is Hemoglobin subunit beta (HBB) from Latimeria chalumnae (Coelacanth).